We begin with the raw amino-acid sequence, 189 residues long: Putative OVARIAN TUMOR DOMAIN-containing deubiquitinating enzyme 8 (189 aa).

Residues 1–103 (MMKSDGNCQF…GIHFNSIYKK (103 aa)) form the OTU domain. Residue aspartate 5 is part of the active site. Catalysis depends on cysteine 8, which acts as the Nucleophile. Residue histidine 96 is part of the active site. A disordered region spans residues 105 to 189 (KEKGSRSSSS…NRNHHFHYSE (85 aa)). Residues 120 to 181 (WMKLQRKKEN…KKEKKEKKNR (62 aa)) adopt a coiled-coil conformation. Short sequence motifs (nuclear localization signal) lie at residues 125-132 (RKKENEAK) and 163-170 (KKKAKVQK). Over residues 126 to 174 (KKENEAKKKEEEEKERKDMEKEEKKKDKEDKKKDKEDKKKAKVQKEKKE) the composition is skewed to basic and acidic residues. The segment covering 175 to 189 (KKEKKNRNHHFHYSE) has biased composition (basic residues).

Belongs to the peptidase C85 family.

It is found in the nucleus. It catalyses the reaction Thiol-dependent hydrolysis of ester, thioester, amide, peptide and isopeptide bonds formed by the C-terminal Gly of ubiquitin (a 76-residue protein attached to proteins as an intracellular targeting signal).. Its function is as follows. Hydrolase that can remove conjugated ubiquitin from proteins in vitro and may therefore play an important regulatory role at the level of protein turnover by preventing degradation. The polypeptide is Putative OVARIAN TUMOR DOMAIN-containing deubiquitinating enzyme 8 (Arabidopsis thaliana (Mouse-ear cress)).